The primary structure comprises 110 residues: U-scoloptoxin(16)-Er7a (110 aa).

The first 26 residues, 1–26 (MTSTRKLSVSCLIVFMVSSLIAVSSG), serve as a signal peptide directing secretion.

The protein belongs to the scoloptoxin-16 family. Post-translationally, contains 4 disulfide bonds. Expressed by the venom gland.

It is found in the secreted. The polypeptide is U-scoloptoxin(16)-Er7a (Ethmostigmus rubripes (Giant centipede)).